Reading from the N-terminus, the 741-residue chain is ATP-dependent RNA helicase DRS1 (741 aa).

Over residues 35 to 44 (VKNKKNKKSK) the composition is skewed to basic residues. 2 disordered regions span residues 35 to 63 (VKNK…INPN) and 106 to 200 (GGLV…EDTA). Composition is skewed to acidic residues over residues 118–147 (KEEE…EELA) and 159–200 (VIDE…EDTA). A Q motif motif is present at residues 222 to 250 (TTFQTLQLSRPVLKGLSQLGYTKPSPIQS). In terms of domain architecture, Helicase ATP-binding spans 253–429 (IPIALLGRDI…QLSLQRPVRI (177 aa)). 266–273 (AVTGSGKT) is an ATP binding site. The DEAD box signature appears at 376 to 379 (DEAD). In terms of domain architecture, Helicase C-terminal spans 458 to 603 (LLFQLLKKLD…GGEVKGKAVS (146 aa)). The stretch at 610–657 (DVEQLNKIVESKQEIIEEVLDEEKQAKEILQAEMQLAKASNMMKHEKE) forms a coiled coil. Residues 650–741 (NMMKHEKEIQ…GSSKGGKRRK (92 aa)) are disordered. Over residues 652–672 (MKHEKEIQSRPKRTWFESEKD) the composition is skewed to basic and acidic residues. Basic residues predominate over residues 686–697 (KHGKKVNSKKRK). Over residues 698–723 (AIEVKKDDGGRSYKKTKVDRITDQKR) the composition is skewed to basic and acidic residues.

The protein belongs to the DEAD box helicase family. DDX27/DRS1 subfamily. In terms of assembly, associates with pre-ribosomal particles.

It is found in the nucleus. The protein localises to the nucleolus. It carries out the reaction ATP + H2O = ADP + phosphate + H(+). Its function is as follows. ATP-binding RNA helicase involved in ribosome assembly. The polypeptide is ATP-dependent RNA helicase DRS1 (DRS1) (Scheffersomyces stipitis (strain ATCC 58785 / CBS 6054 / NBRC 10063 / NRRL Y-11545) (Yeast)).